We begin with the raw amino-acid sequence, 383 residues long: 1-deoxy-D-xylulose 5-phosphate reductoisomerase (383 aa).

Residues threonine 10, glycine 11, serine 12, isoleucine 13, glycine 36, lysine 37, asparagine 38, and asparagine 122 each coordinate NADPH. 1-deoxy-D-xylulose 5-phosphate is bound at residue lysine 123. Glutamate 124 provides a ligand contact to NADPH. Residue aspartate 148 participates in Mn(2+) binding. Positions 149, 150, 174, and 197 each coordinate 1-deoxy-D-xylulose 5-phosphate. Mn(2+) is bound at residue glutamate 150. Glycine 203 is a binding site for NADPH. Residues serine 210, asparagine 215, lysine 216, and glutamate 219 each coordinate 1-deoxy-D-xylulose 5-phosphate. Glutamate 219 provides a ligand contact to Mn(2+).

The protein belongs to the DXR family. It depends on Mg(2+) as a cofactor. Requires Mn(2+) as cofactor.

The enzyme catalyses 2-C-methyl-D-erythritol 4-phosphate + NADP(+) = 1-deoxy-D-xylulose 5-phosphate + NADPH + H(+). Its pathway is isoprenoid biosynthesis; isopentenyl diphosphate biosynthesis via DXP pathway; isopentenyl diphosphate from 1-deoxy-D-xylulose 5-phosphate: step 1/6. Functionally, catalyzes the NADPH-dependent rearrangement and reduction of 1-deoxy-D-xylulose-5-phosphate (DXP) to 2-C-methyl-D-erythritol 4-phosphate (MEP). This Bacillus velezensis (strain DSM 23117 / BGSC 10A6 / LMG 26770 / FZB42) (Bacillus amyloliquefaciens subsp. plantarum) protein is 1-deoxy-D-xylulose 5-phosphate reductoisomerase.